Consider the following 78-residue polypeptide: Large ribosomal subunit protein bL28 (78 aa).

This sequence belongs to the bacterial ribosomal protein bL28 family.

The sequence is that of Large ribosomal subunit protein bL28 from Psychrobacter sp. (strain PRwf-1).